A 358-amino-acid chain; its full sequence is 3-dehydroquinate synthase (358 aa).

NAD(+) contacts are provided by residues 70–75 (DGEKFK), 104–108 (GVVGD), 128–129 (TT), lysine 141, lysine 150, and 168–171 (CLQT). Zn(2+)-binding residues include glutamate 183, histidine 246, and histidine 263.

The protein belongs to the sugar phosphate cyclases superfamily. Dehydroquinate synthase family. Co(2+) is required as a cofactor. It depends on Zn(2+) as a cofactor. NAD(+) serves as cofactor.

The protein resides in the cytoplasm. The catalysed reaction is 7-phospho-2-dehydro-3-deoxy-D-arabino-heptonate = 3-dehydroquinate + phosphate. It participates in metabolic intermediate biosynthesis; chorismate biosynthesis; chorismate from D-erythrose 4-phosphate and phosphoenolpyruvate: step 2/7. Catalyzes the conversion of 3-deoxy-D-arabino-heptulosonate 7-phosphate (DAHP) to dehydroquinate (DHQ). The sequence is that of 3-dehydroquinate synthase from Shewanella frigidimarina (strain NCIMB 400).